The following is a 57-amino-acid chain: Large ribosomal subunit protein bL32 (57 aa).

The interval 1–20 is disordered; it reads MAVQQRRSSKHRRDKRRSHD. A compositionally biased stretch (basic residues) spans 7-18; sequence RSSKHRRDKRRS.

This sequence belongs to the bacterial ribosomal protein bL32 family.

The protein is Large ribosomal subunit protein bL32 (rpmF) of Mycoplasma genitalium (strain ATCC 33530 / DSM 19775 / NCTC 10195 / G37) (Mycoplasmoides genitalium).